A 124-amino-acid chain; its full sequence is UPF0231 protein Shewana3_0655 (124 aa).

Belongs to the UPF0231 family.

This Shewanella sp. (strain ANA-3) protein is UPF0231 protein Shewana3_0655.